Reading from the N-terminus, the 330-residue chain is ADP-L-glycero-D-manno-heptose-6-epimerase (330 aa).

NADP(+) is bound by residues 11–12 (FI), 32–33 (DN), Lys-39, Lys-54, 75–79 (EGACS), and Asn-92. The active-site Proton acceptor is Tyr-139. Lys-143 is an NADP(+) binding site. Asn-168 is a binding site for substrate. Residues Val-169 and Lys-177 each contribute to the NADP(+) site. Lys-177 (proton acceptor) is an active-site residue. Substrate-binding positions include Arg-179, His-186, 200 to 203 (FGEY), Arg-213, and Tyr-292.

Belongs to the NAD(P)-dependent epimerase/dehydratase family. HldD subfamily. Homopentamer. It depends on NADP(+) as a cofactor.

The catalysed reaction is ADP-D-glycero-beta-D-manno-heptose = ADP-L-glycero-beta-D-manno-heptose. It functions in the pathway nucleotide-sugar biosynthesis; ADP-L-glycero-beta-D-manno-heptose biosynthesis; ADP-L-glycero-beta-D-manno-heptose from D-glycero-beta-D-manno-heptose 7-phosphate: step 4/4. Its function is as follows. Catalyzes the interconversion between ADP-D-glycero-beta-D-manno-heptose and ADP-L-glycero-beta-D-manno-heptose via an epimerization at carbon 6 of the heptose. This chain is ADP-L-glycero-D-manno-heptose-6-epimerase, found in Burkholderia ambifaria (strain MC40-6).